We begin with the raw amino-acid sequence, 819 residues long: Ferric-pyoverdine 358 receptor (819 aa).

Residues 1–47 (MSKPLPSALNPLAKALLIRHSLRPRHALSRIGMGLALSSALVFQVQA) form the signal peptide. A TonB box motif is present at residues 115–122 (NTVTVTAS). Residues 166-276 (SIRETPQTIT…PSAVVNVIRK (111 aa)) form the TBDR plug domain. The 539-residue stretch at 281–819 (EFKSHIQAGV…NATVTLRYDF (539 aa)) folds into the TBDR beta-barrel domain. The short motif at 802–819 (YGHYGAPRNATVTLRYDF) is the TonB C-terminal box element.

This sequence belongs to the TonB-dependent receptor family.

The protein resides in the cell outer membrane. In terms of biological role, specific receptor for the siderophore ferric pyoverdine (pseudobactin) 358. In Pseudomonas putida (Arthrobacter siderocapsulatus), this protein is Ferric-pyoverdine 358 receptor (pupA).